The following is a 226-amino-acid chain: Transcriptional regulatory protein PcoR (226 aa).

Positions 3–117 (RILIVEDEQK…ELVARVRTLL (115 aa)) constitute a Response regulatory domain. At Asp-52 the chain carries 4-aspartylphosphate. The ompR/PhoB-type DNA-binding region spans 125–223 (ATVCTIADMT…VRGAGYVLEI (99 aa)).

Phosphorylated by PcoS.

The protein localises to the cytoplasm. Functionally, probable member of a two-component regulatory system PcoS/PcoR. May be involved in the activation of copper resistance gene operon pcoABCD by binding to a specific site on the cop operon promoter (copper box). This is Transcriptional regulatory protein PcoR (pcoR) from Escherichia coli.